Reading from the N-terminus, the 476-residue chain is Protein PAL OF QUIRKY (476 aa).

Residues 1–14 (MTTVSSAFATVAEG) form the signal peptide. Residues 204–256 (TRRTNSGTSGSGDGNGGICGQESMMLETNSSFGSTSSSVSSSNLPPIKSSGED) are disordered. Over residues 212 to 222 (SGSGDGNGGIC) the composition is skewed to gly residues. Positions 233 to 252 (SSFGSTSSSVSSSNLPPIKS) are enriched in low complexity.

As to quaternary structure, homodimer. Interacts with QKY and SUB/SCM at the plasma membrane. Observed in seedlings, roots, shoots, leaves, stems, inflorescence and flowers.

The protein localises to the cell membrane. Its subcellular location is the endomembrane system. In terms of biological role, collaboratively with SUB and QKY, regulates cell growth anisotropy during gynoecium development, thus linking together cell-cell communication and cellular growth. The chain is Protein PAL OF QUIRKY from Arabidopsis thaliana (Mouse-ear cress).